Here is a 175-residue protein sequence, read N- to C-terminus: Colicin-B immunity protein (175 aa).

3 helical membrane-spanning segments follow: residues 14-32 (ILYA…ILIL), 104-121 (CFWG…TLFY), and 149-168 (IYFT…LLVI).

Its subcellular location is the cell inner membrane. In terms of biological role, this protein is able to protect a cell, which harbors the plasmid ColB encoding colicin B, against colicin B. The chain is Colicin-B immunity protein (cbi) from Escherichia coli.